A 217-amino-acid polypeptide reads, in one-letter code: Protein-L-isoaspartate O-methyltransferase 2 (217 aa).

Serine 62 is an active-site residue.

Belongs to the methyltransferase superfamily. L-isoaspartyl/D-aspartyl protein methyltransferase family.

The protein localises to the cytoplasm. It carries out the reaction [protein]-L-isoaspartate + S-adenosyl-L-methionine = [protein]-L-isoaspartate alpha-methyl ester + S-adenosyl-L-homocysteine. In terms of biological role, catalyzes the methyl esterification of L-isoaspartyl residues in peptides and proteins that result from spontaneous decomposition of normal L-aspartyl and L-asparaginyl residues. It plays a role in the repair and/or degradation of damaged proteins. The chain is Protein-L-isoaspartate O-methyltransferase 2 from Geotalea uraniireducens (strain Rf4) (Geobacter uraniireducens).